The sequence spans 235 residues: Flavonoid 3',5'-methyltransferase (235 aa).

S-adenosyl-L-methionine contacts are provided by residues Val51, Glu73, 75-76 (GV), Ser81, Asp99, and Ala128. Residue Asp151 participates in a divalent metal cation binding. Asp153 is an S-adenosyl-L-methionine binding site. A divalent metal cation contacts are provided by Asp177 and Asn178.

Belongs to the class I-like SAM-binding methyltransferase superfamily. Cation-dependent O-methyltransferase family. CCoAMT subfamily. A divalent metal cation is required as a cofactor.

It localises to the cytoplasm. It catalyses the reaction S-adenosyl-L-methionine + a 3'-hydroxyflavonoid = S-adenosyl-L-homocysteine + a 3'-methoxyflavonoid.. The catalysed reaction is S-adenosyl-L-methionine + a 5'-hydroxy-3'-methoxyflavonoid = S-adenosyl-L-homocysteine + a 3',5'-dimethoxyflavonoid.. It participates in pigment biosynthesis; anthocyanin biosynthesis. In terms of biological role, mediates O-methylation of anthocyanins. Anthocyanins are major pigments in grapes: at ripening initiation in red grapevine berries, the exocarp turns color from green to red and then to purple due to the accumulation and extent of methylation of anthocyanins. Catalyzes both 3' and 5' O-methylation of anthocyanins, with a preference for glycosylated substrates. Active on both anthocyanins and flavonols in vitro. Most active with delphinidin 3-glucoside but also acts on cyanidin 3-glucoside, cyanidin, myricetin, quercetin and quercetin 3-glucoside. Not able to methylate flavan type skeletons with chiral centers, such as catechins or dihydroquercetin. In Vitis vinifera (Grape), this protein is Flavonoid 3',5'-methyltransferase (FAOMT).